Here is a 217-residue protein sequence, read N- to C-terminus: MFDANCLKLMFVAGSQDFYHIKGDRTNALLDTLELALQSKITAFQFRQKGDLALQDPVEIKRLALECQKLCKKYGTPFIINDEVRLALELKADGVHVGQEDMAIEEVVTLCQKRLFIGLSVNTLEQALKARHLDHIAYLGVGPIFPTPSKKDAKEVVGVNLLKKIHDSGVEKPLIAIGGITTDNASKLQKFSGIAVISAITQAKDKALAVEKLLKNA.

4-amino-2-methyl-5-(diphosphooxymethyl)pyrimidine is bound by residues 45-49 (QFRQK) and Asn-81. 2 residues coordinate Mg(2+): Asp-82 and Asp-101. 4-amino-2-methyl-5-(diphosphooxymethyl)pyrimidine is bound at residue Ser-120. 147-149 (TPS) serves as a coordination point for 2-[(2R,5Z)-2-carboxy-4-methylthiazol-5(2H)-ylidene]ethyl phosphate. Residue Lys-150 participates in 4-amino-2-methyl-5-(diphosphooxymethyl)pyrimidine binding. Residues Gly-179 and 197–198 (IS) contribute to the 2-[(2R,5Z)-2-carboxy-4-methylthiazol-5(2H)-ylidene]ethyl phosphate site.

Belongs to the thiamine-phosphate synthase family. It depends on Mg(2+) as a cofactor.

The enzyme catalyses 2-[(2R,5Z)-2-carboxy-4-methylthiazol-5(2H)-ylidene]ethyl phosphate + 4-amino-2-methyl-5-(diphosphooxymethyl)pyrimidine + 2 H(+) = thiamine phosphate + CO2 + diphosphate. The catalysed reaction is 2-(2-carboxy-4-methylthiazol-5-yl)ethyl phosphate + 4-amino-2-methyl-5-(diphosphooxymethyl)pyrimidine + 2 H(+) = thiamine phosphate + CO2 + diphosphate. It carries out the reaction 4-methyl-5-(2-phosphooxyethyl)-thiazole + 4-amino-2-methyl-5-(diphosphooxymethyl)pyrimidine + H(+) = thiamine phosphate + diphosphate. Its pathway is cofactor biosynthesis; thiamine diphosphate biosynthesis; thiamine phosphate from 4-amino-2-methyl-5-diphosphomethylpyrimidine and 4-methyl-5-(2-phosphoethyl)-thiazole: step 1/1. Functionally, condenses 4-methyl-5-(beta-hydroxyethyl)thiazole monophosphate (THZ-P) and 2-methyl-4-amino-5-hydroxymethyl pyrimidine pyrophosphate (HMP-PP) to form thiamine monophosphate (TMP). This is Thiamine-phosphate synthase from Helicobacter pylori (strain J99 / ATCC 700824) (Campylobacter pylori J99).